Reading from the N-terminus, the 814-residue chain is Phenylalanine--tRNA ligase beta subunit (814 aa).

The region spanning 39 to 153 (SARAKGVVVG…ELPALGAPVA (115 aa)) is the tRNA-binding domain. A B5 domain is found at 414–498 (ADASSVLLRR…RLVGFDRFGA (85 aa)). Mg(2+) is bound by residues D476, D482, E485, and E486. The 94-residue stretch at 720–813 (PTVPASERDL…LVKQHGAELR (94 aa)) folds into the FDX-ACB domain.

Belongs to the phenylalanyl-tRNA synthetase beta subunit family. Type 1 subfamily. In terms of assembly, tetramer of two alpha and two beta subunits. Requires Mg(2+) as cofactor.

The protein localises to the cytoplasm. The enzyme catalyses tRNA(Phe) + L-phenylalanine + ATP = L-phenylalanyl-tRNA(Phe) + AMP + diphosphate + H(+). The chain is Phenylalanine--tRNA ligase beta subunit from Parasynechococcus marenigrum (strain WH8102).